The sequence spans 502 residues: Zinc finger C3HC-type protein 1 (502 aa).

Ala2 carries the N-acetylalanine modification. At Ser24 the chain carries Phosphoserine. Residue Thr28 is modified to Phosphothreonine. Residues 36–73 form a disordered region; the sequence is IDEGIAPEEGGVDAKDTSATSQSVNGSPQAEQPSLEST. Positions 52–72 are enriched in polar residues; sequence TSATSQSVNGSPQAEQPSLES. Residues Ser58 and Ser62 each carry the phosphoserine modification. Phosphothreonine is present on Thr84. A C3HC-type zinc finger spans residues 102 to 156; sequence CAKYGWVTVECDMLKCSSCQAFLCASLQPAFDFDRYKQRCAELKKALCTAHEKFC. The interval 170-210 is F-box-like; it reads LPLDEPAILVSEFLDRFQSLCHLDLQLPSLRPEDLKTMCLT. The tract at residues 302-423 is disordered; the sequence is SSPIPGLEGR…SSRSFFDPTS (122 aa). Residues Ser321 and Ser329 each carry the phosphoserine modification. Positions 327 to 338 are enriched in polar residues; sequence TRSQDATFSPGS. Thr333 is subject to Phosphothreonine. Ser335, Ser338, Ser344, Ser354, Ser359, and Ser370 each carry phosphoserine. Polar residues predominate over residues 351 to 360; sequence RTRSWDSSSP. Residues 371–380 are compositionally biased toward low complexity; that stretch reads PTTRTRPVTR. Ser381 carries the post-translational modification Phosphoserine. Residues Thr384 and Thr387 each carry the phosphothreonine modification. The residue at position 395 (Ser395) is a Phosphoserine. The short motif at 396–402 is the Nuclear localization signal element; it reads PLRKAKR. Ser407 and Ser483 each carry phosphoserine. Low complexity predominate over residues 407-422; it reads SSSSSDTSSRSFFDPT.

As to quaternary structure, interacts with TPR; this interaction mediates ZC3HC1 nuclear envelopes (NE)-association but also required for proper positioning of a substantial amount of TPR at the nuclear basket (NB). Phosphorylated. May also be weakly phosphorylated on Tyr residues. In terms of tissue distribution, widely expressed. Highly expressed in heart, skeletal muscle and testis. Expressed in brain, placenta, lung, kidney, liver, pancreas, spleen, thymus, prostate, ovary small intestine and colon. Weakly or not expressed in leukocytes.

The protein localises to the nucleus. The protein resides in the nucleus envelope. Functionally, required for proper positioning of a substantial amount of TPR at the nuclear basket (NB) through interaction with TPR. This is Zinc finger C3HC-type protein 1 from Homo sapiens (Human).